Reading from the N-terminus, the 478-residue chain is F-box protein YDR306C (478 aa).

Over residues 1-14 (MANKSRPKKIKAPY) the composition is skewed to basic residues. Disordered stretches follow at residues 1 to 32 (MANK…DNKA) and 67 to 101 (RLSN…VIES). The segment covering 80 to 90 (QSPSSSSTSSS) has biased composition (low complexity). The span at 91-101 (KGEKNGKVIES) shows a compositional bias: basic and acidic residues. The region spanning 112-173 (KMVLPWEIQH…CLPKLYYAPA (62 aa)) is the F-box domain.

Interacts with SKP1. Component of the probable SCF(YDR306C) complex containing CDC53, SKP1, RBX1 and YDR306C. Autoubiquitinated by the E3 ubiquitin ligase complex in conjunction with the E2 enzyme CDC34.

It functions in the pathway protein modification; protein ubiquitination. In terms of biological role, substrate recognition component of a SCF (SKP1-CUL1-F-box protein) E3 ubiquitin-protein ligase complex which mediates the ubiquitination and subsequent proteasomal degradation of target proteins. Probably recognizes and binds to phosphorylated target proteins. This Saccharomyces cerevisiae (strain ATCC 204508 / S288c) (Baker's yeast) protein is F-box protein YDR306C.